We begin with the raw amino-acid sequence, 172 residues long: Galectin-related protein (172 aa).

An N-acetylalanine modification is found at Ala2. Residues Ser22 and Ser25 each carry the phosphoserine modification. Residues 39-168 (PFCGHIKGGM…TIKINGDLQI (130 aa)) form the Galectin domain.

In terms of assembly, monomer.

Its function is as follows. Does not bind lactose, and may not bind carbohydrates. This is Galectin-related protein (Lgalsl) from Mus musculus (Mouse).